The following is a 224-amino-acid chain: Transcription factor HEC3 (224 aa).

Disordered stretches follow at residues 22–42 and 68–88; these read SSNN…DPIG and SLTT…EEEP. Positions 28–37 are enriched in basic and acidic residues; sequence KNDDHHHQHN. The segment covering 68–77 has biased composition (low complexity); it reads SLTTTTLLSG. Positions 78-88 are enriched in acidic residues; the sequence is DQEDDEDEEEP. The bHLH domain occupies 125–174; that stretch reads ISDDPQSVAARHRRERISERIRILQRLVPGGTKMDTASMLDEAIRYVKFL. The interval 183–224 is disordered; sequence NNTGYTPPPPQDQASQAVTTSWVSPPPPPSFGRGGRGVGELI. Residues 194-204 show a composition bias toward polar residues; sequence DQASQAVTTSW. Gly residues predominate over residues 214 to 224; it reads GRGGRGVGELI.

Homodimer. Interacts with SPT. As to expression, gynoecium.

Its subcellular location is the nucleus. Functionally, required for the female reproductive tract development and fertility. The sequence is that of Transcription factor HEC3 (HEC3) from Arabidopsis thaliana (Mouse-ear cress).